The sequence spans 92 residues: Small ribosomal subunit protein uS19c (92 aa).

Belongs to the universal ribosomal protein uS19 family.

It is found in the plastid. It localises to the chloroplast. Functionally, protein S19 forms a complex with S13 that binds strongly to the 16S ribosomal RNA. The polypeptide is Small ribosomal subunit protein uS19c (rps19) (Picea abies (Norway spruce)).